The sequence spans 989 residues: Voltage-gated delayed rectifier potassium channel KCNH1 (989 aa).

At 1–220 the chain is on the cytoplasmic side; it reads MTMAGGRRGL…LHYCVFKTTW (220 aa). Residues 14 to 94 form the PAS domain; it reads QNTFLENIVR…QTFENYEMNS (81 aa). Residues 93-145 form the PAC domain; sequence NSFEILMYKKNRTPVWFFVKIAPIRNEQDKVVLFLCTFSDITAFKQPIEDDSC. Residues 151–162 are required for phosphatidylinositol bisphosphate binding; that stretch reads FARLTRALTSSR. A helical membrane pass occupies residues 221 to 241; it reads DWIILILTFYTAILVPYNVSF. Topologically, residues 242–248 are extracellular; the sequence is KTRQNNV. A helical transmembrane segment spans residues 249–269; it reads AWLVVDSIVDVIFLVDIVLNF. Topologically, residues 270–290 are cytoplasmic; sequence HTTFVGPAGEVISDPKLIRMN. A helical transmembrane segment spans residues 291 to 309; the sequence is YLKTWFVIDLLSCLPYDVI. The Extracellular portion of the chain corresponds to 310–345; it reads NAFENVDEVSAFMGDPGKIGFADQIPPPLEGRESQG. The chain crosses the membrane as a helical; Voltage-sensor span at residues 346-368; sequence ISSLFSSLKVVRLLRLGRVARKL. The Cytoplasmic segment spans residues 369-377; the sequence is DHYIEYGAA. The chain crosses the membrane as a helical span at residues 378–399; it reads VLVLLVCVFGLAAHWMACIWYS. Topologically, residues 400–448 are extracellular; sequence IGDYEIFDEDTKTIRNNSWLYQLALDIGTPYQFNGSGSGKWEGGPSKNS. N-linked (GlcNAc...) asparagine glycosylation is found at Asn-415 and Asn-433. The segment at residues 449 to 470 is an intramembrane region (pore-forming); sequence VYISSLYFTMTSLTSVGFGNIA. A Selectivity filter motif is present at residues 463-468; sequence SVGFGN. At 471-477 the chain is on the extracellular side; sequence PSTDIEK. Residues 478 to 498 traverse the membrane as a helical segment; that stretch reads IFAVAIMMIGSLLYATIFGNV. Topologically, residues 499 to 989 are cytoplasmic; sequence TTIFQQMYAN…ESDRDIFGAS (491 aa). The interval 673 to 770 is calmodulin-binding; that stretch reads KRDALQKVLE…LDDLDVEKGN (98 aa). Positions 699–701 are interaction with cyclic nucleotide-binding pocket; sequence YNL. 2 stretches are compositionally biased toward basic and acidic residues: residues 857–879 and 887–901; these read ESME…KTDS and SDLR…RSPQ. Disordered stretches follow at residues 857-905 and 961-989; these read ESME…DRSP and RGSA…FGAS. The CAD (involved in subunit assembly) stretch occupies residues 924–964; it reads ATVLEVKYELKEDIKALNAKMTSIEKQLSEILRILMSRGSA. A compositionally biased stretch (polar residues) spans 962-979; it reads GSAQSPQETGEISRPQSP. Residues Ser-974, Ser-978, and Ser-981 each carry the phosphoserine modification. A compositionally biased stretch (basic and acidic residues) spans 980-989; the sequence is ESDRDIFGAS.

This sequence belongs to the potassium channel family. H (Eag) (TC 1.A.1.20) subfamily. Kv10.1/KCNH1 sub-subfamily. As to quaternary structure, homomultimer. The potassium channel is composed of a homo- or heterotetrameric complex of pore-forming alpha subunits that can associate with modulating beta subunits. Heteromultimer with KCNH5/EAG2. Interacts with ALG10B. Interacts with RABEP1. Interacts (via C-terminus) with CTTN. Interacts (via C-terminal cytoplasmic region) with Ca(2+)-bound calmodulin. Post-translationally, channel activity is regulated via tyrosine phosphorylation/dephosphorylation by SRC and PTPN6. As to expression, detected in brain (at protein level). Highly expressed in olfactory bulb. Detected in brain cortex, hippocampus, brain stem, striatum, thalamus, hypothalamus and spinal cord.

Its subcellular location is the cell membrane. It localises to the nucleus inner membrane. The protein resides in the cell projection. The protein localises to the dendrite. It is found in the axon. Its subcellular location is the presynaptic cell membrane. It localises to the perikaryon. The protein resides in the postsynaptic density membrane. The protein localises to the early endosome membrane. It carries out the reaction K(+)(in) = K(+)(out). Channel activity is inhibited by interaction with Ca(2+)-bound calmodulin. Interaction of a single pore-forming alpha subunit with a calmodulin chain is sufficient to promote channel closure. Channel activity is not regulated by cyclic nucleotides. Channel activity is inhibited by binding intracellular phosphatidylinositol-3,5-bisphosphate and phosphatidylinositol-4,5-bisphosphate (PIP2), but is not inhibited by phosphatidylinositol 4-phosphate. Its function is as follows. Pore-forming (alpha) subunit of a voltage-gated delayed rectifier potassium channel that mediates outward-rectifying potassium currents which, on depolarization, reaches a steady-state level and do not inactivate. The activation kinetics depend on the prepulse potential and external divalent cation concentration. With negative prepulses, the current activation is delayed and slowed down several fold, whereas more positive prepulses speed up activation. The time course of activation is biphasic with a fast and a slowly activating current component. Activates at more positive membrane potentials and exhibit a steeper activation curve. Channel properties are modulated by subunit assembly. Mediates IK(NI) current in myoblasts. Involved in the regulation of cell proliferation and differentiation, in particular adipogenic and osteogenic differentiation in bone marrow-derived mesenchymal stem cells (MSCs). This chain is Voltage-gated delayed rectifier potassium channel KCNH1, found in Mus musculus (Mouse).